We begin with the raw amino-acid sequence, 906 residues long: Serine-aspartate repeat-containing protein C (906 aa).

The signal sequence occupies residues 1–50 (MNNKKTATNRKGMIPNRLNKFSIRKYSVGTASILVGTTLIFGLSGHEAKA). Positions 51–127 (AEHTNGELNQ…QPTKKNNDAT (77 aa)) are disordered. A ligand binding A region region spans residues 51-486 (AEHTNGELNQ…GSSTANGDQK (436 aa)). Polar residues-rich tracts occupy residues 56–71 (GELN…PSEN) and 80–119 (RQQN…STQP). CNA-B domains are found at residues 487-597 (KYNL…YKTP) and 598-708 (KYSL…EEET). The interval 669 to 881 (KQTGTNTTED…TGSENNGSNN (213 aa)) is disordered. Acidic residues-rich tracts occupy residues 676-686 (TEDDKDADGGE) and 703-845 (YFEE…DSDS). Positions 869–873 (LPETG) match the LPXTG sorting signal motif. Residue threonine 872 is modified to Pentaglycyl murein peptidoglycan amidated threonine. The propeptide at 873-906 (GSENNGSNNATLFGGLFAALGSLLLFGRRKKQNK) is removed by sortase.

This sequence belongs to the serine-aspartate repeat-containing protein (SDr) family. Homodimerizes; via N2-Domain. Interacts with host NRXN1; this interaction mediates bacterial attachment to host cells.

It localises to the secreted. It is found in the cell wall. Its function is as follows. Cell surface-associated calcium-binding protein which plays an important role in adhesion and pathogenesis. Mediates interactions with components of the extracellular matrix such as host NRXN1 to promote bacterial adhesion. In Staphylococcus aureus (strain MRSA252), this protein is Serine-aspartate repeat-containing protein C (sdrC).